The following is a 229-amino-acid chain: tRNA pseudouridine synthase B (229 aa).

Aspartate 52 (nucleophile) is an active-site residue.

The protein belongs to the pseudouridine synthase TruB family. Type 1 subfamily.

The enzyme catalyses uridine(55) in tRNA = pseudouridine(55) in tRNA. Responsible for synthesis of pseudouridine from uracil-55 in the psi GC loop of transfer RNAs. This Flavobacterium johnsoniae (strain ATCC 17061 / DSM 2064 / JCM 8514 / BCRC 14874 / CCUG 350202 / NBRC 14942 / NCIMB 11054 / UW101) (Cytophaga johnsonae) protein is tRNA pseudouridine synthase B.